A 346-amino-acid chain; its full sequence is tRNA N6-adenosine threonylcarbamoyltransferase (346 aa).

Fe cation contacts are provided by histidine 111 and histidine 115. Residues 134 to 138, aspartate 167, glycine 180, and asparagine 279 contribute to the substrate site; that span reads LVSGG. Residue aspartate 307 participates in Fe cation binding.

Belongs to the KAE1 / TsaD family. Requires Fe(2+) as cofactor.

It is found in the cytoplasm. The catalysed reaction is L-threonylcarbamoyladenylate + adenosine(37) in tRNA = N(6)-L-threonylcarbamoyladenosine(37) in tRNA + AMP + H(+). In terms of biological role, required for the formation of a threonylcarbamoyl group on adenosine at position 37 (t(6)A37) in tRNAs that read codons beginning with adenine. Is involved in the transfer of the threonylcarbamoyl moiety of threonylcarbamoyl-AMP (TC-AMP) to the N6 group of A37, together with TsaE and TsaB. TsaD likely plays a direct catalytic role in this reaction. This Burkholderia lata (strain ATCC 17760 / DSM 23089 / LMG 22485 / NCIMB 9086 / R18194 / 383) protein is tRNA N6-adenosine threonylcarbamoyltransferase.